Consider the following 1377-residue polypeptide: Zinc finger MYM-type protein 2 (1377 aa).

Residues K48, K88, K98, and K104 each participate in a glycyl lysine isopeptide (Lys-Gly) (interchain with G-Cter in SUMO2) cross-link. Polar residues-rich tracts occupy residues 85–115 (TSSK…SVSE) and 127–138 (TNQGQEKNSSNF). The disordered stretch occupies residues 85-177 (TSSKNEELQG…GMGNSGITTE (93 aa)). Positions 139-152 (IERRPPETKNRTND) are enriched in basic and acidic residues. K147 participates in a covalent cross-link: Glycyl lysine isopeptide (Lys-Gly) (interchain with G-Cter in SUMO2). Positions 153–164 (VDFSTSSFSRSK) are enriched in polar residues. Position 159 is a phosphoserine (S159). Glycyl lysine isopeptide (Lys-Gly) (interchain with G-Cter in SUMO2) cross-links involve residues K253 and K297. Positions 273-305 (NGESATHHNPDSWISQSASFPRNQKQPGVDSLS) are disordered. A compositionally biased stretch (polar residues) spans 284 to 298 (SWISQSASFPRNQKQ). At S305 the chain carries Phosphoserine. Glycyl lysine isopeptide (Lys-Gly) (interchain with G-Cter in SUMO2) cross-links involve residues K312, K325, K348, and K366. The MYM-type 1 zinc-finger motif lies at 327-363 (VKVTCANCKKPLQKGQTAYQRKGSAHLFCSTTCLSSF). The MYM-type 2 zinc finger occupies 369–409 (PKKLCVMCKKDITTMKGTIVAQVDSSESFQEFCSTSCLSLY). Residues K417, K441, K491, K503, K513, K529, and K532 each participate in a glycyl lysine isopeptide (Lys-Gly) (interchain with G-Cter in SUMO2) cross-link. 2 consecutive MYM-type zinc fingers follow at residues 421 to 456 (NKSR…FNRY) and 463 to 502 (IMNC…VSEY). The MYM-type 5 zinc-finger motif lies at 533 to 570 (LTTCTGCRTQCRFFDMTQCIGPNGYMEPYCSTACMNSH). Glycyl lysine isopeptide (Lys-Gly) (interchain with G-Cter in SUMO2) cross-links involve residues K576, K603, K649, K658, K688, K700, and K709. The MYM-type 6 zinc finger occupies 636-671 (QLKCNYCKNSFCSKPEILEWENKVHQFCSKTCSDDY). MYM-type zinc fingers lie at residues 723–758 (RCVT…CKKF) and 764–799 (KAAR…LLRF). Residues K764, K788, K812, and K829 each participate in a glycyl lysine isopeptide (Lys-Gly) (interchain with G-Cter in SUMO2) cross-link. A phosphoserine mark is found at S838 and S958. Disordered stretches follow at residues 983–1002 (LLKN…PYEP) and 1028–1064 (VFGE…SDNS). Positions 1039–1050 (PRSKKKGAKRKA) are enriched in basic residues. S1064 bears the Phosphoserine mark. T1376 is modified (phosphothreonine).

As to quaternary structure, may be a component of a BHC histone deacetylase complex that contains HDAC1, HDAC2, HMG20B/BRAF35, KDM1A, RCOR1/CoREST, PHF21A/BHC80, ZNF198, ZNF217, ZMYM3, GSE1 and GTF2I.

The protein localises to the nucleus. Functionally, may function as a transcription factor. The protein is Zinc finger MYM-type protein 2 (ZMYM2) of Pongo abelii (Sumatran orangutan).